A 633-amino-acid polypeptide reads, in one-letter code: Telomere-binding protein 1 (633 aa).

The disordered stretch occupies residues 253 to 272 (HAADRDDDENSSGCVHPSTS). Over residues 263 to 272 (SSGCVHPSTS) the composition is skewed to polar residues. One can recognise a Ubiquitin-like domain in the interval 351–430 (VKLTIKSFNI…LNDIGFTLEC (80 aa)). Residues 506–615 (PFADPNSLAL…RVLAAQAYWS (110 aa)) are sufficient for telomeric DNA binding. The region spanning 529 to 588 (GQRRIRRPFTVAEVELLVEAVEHLGTGRWRDVKFRAFENVHHRTYVDLKDKWKTLVHTAS) is the HTH myb-type domain. The SANT domain occupies 534–584 (RRPFTVAEVELLVEAVEHLGTGRWRDVKFRAFENVHHRTYVDLKDKWKTLV). Positions 557 to 584 (WRDVKFRAFENVHHRTYVDLKDKWKTLV) form a DNA-binding region, H-T-H motif.

Homodimer. In terms of tissue distribution, ubiquitous.

The protein resides in the chromosome. It is found in the telomere. Functionally, binds the telomeric double-stranded 5'TTTAGGG-3' repeat and regulates telomere length and structure. In Oryza sativa subsp. japonica (Rice), this protein is Telomere-binding protein 1 (TBP1).